Here is a 286-residue protein sequence, read N- to C-terminus: Gap junction alpha-6 protein (286 aa).

Residues Met1–Lys23 lie on the Cytoplasmic side of the membrane. The helical transmembrane segment at Val24–Ile41 threads the bilayer. The Extracellular segment spans residues Glu42–Arg76. Residues Leu77–Val99 form a helical membrane-spanning segment. Topologically, residues Ile100–Arg151 are cytoplasmic. A helical membrane pass occupies residues Leu152–Gln174. Residues Trp175–Ile209 are Extracellular-facing. The chain crosses the membrane as a helical span at residues Phe210–Val232. Over Leu233 to Met286 the chain is Cytoplasmic.

This sequence belongs to the connexin family. Alpha-type (group II) subfamily. In terms of assembly, a connexon is composed of a hexamer of connexins. Expressed in testis.

Its subcellular location is the cell membrane. The protein localises to the cell junction. The protein resides in the gap junction. Functionally, one gap junction consists of a cluster of closely packed pairs of transmembrane channels, the connexons, through which materials of low MW diffuse from one cell to a neighboring cell. The polypeptide is Gap junction alpha-6 protein (Gja6) (Rattus norvegicus (Rat)).